We begin with the raw amino-acid sequence, 317 residues long: Transaldolase (317 aa).

The active-site Schiff-base intermediate with substrate is the K131.

The protein belongs to the transaldolase family. Type 1 subfamily. In terms of assembly, homodimer.

The protein localises to the cytoplasm. The catalysed reaction is D-sedoheptulose 7-phosphate + D-glyceraldehyde 3-phosphate = D-erythrose 4-phosphate + beta-D-fructose 6-phosphate. It participates in carbohydrate degradation; pentose phosphate pathway; D-glyceraldehyde 3-phosphate and beta-D-fructose 6-phosphate from D-ribose 5-phosphate and D-xylulose 5-phosphate (non-oxidative stage): step 2/3. In terms of biological role, transaldolase is important for the balance of metabolites in the pentose-phosphate pathway. This Baumannia cicadellinicola subsp. Homalodisca coagulata protein is Transaldolase.